Reading from the N-terminus, the 440-residue chain is tRNA(Ile)-lysidine synthase (440 aa).

Residue 31-36 participates in ATP binding; the sequence is SGGADS.

This sequence belongs to the tRNA(Ile)-lysidine synthase family.

It is found in the cytoplasm. It carries out the reaction cytidine(34) in tRNA(Ile2) + L-lysine + ATP = lysidine(34) in tRNA(Ile2) + AMP + diphosphate + H(+). Ligates lysine onto the cytidine present at position 34 of the AUA codon-specific tRNA(Ile) that contains the anticodon CAU, in an ATP-dependent manner. Cytidine is converted to lysidine, thus changing the amino acid specificity of the tRNA from methionine to isoleucine. This is tRNA(Ile)-lysidine synthase from Borrelia garinii subsp. bavariensis (strain ATCC BAA-2496 / DSM 23469 / PBi) (Borreliella bavariensis).